Here is a 302-residue protein sequence, read N- to C-terminus: uncharacterized protein (302 aa).

9 helical membrane passes run 10 to 30, 65 to 85, 102 to 122, 130 to 150, 162 to 182, 190 to 210, 224 to 244, 251 to 271, and 282 to 302; these read VLSV…GVLG, LVLI…IAYL, VAAA…GIFG, IFYD…LSHI, AVFF…LWGL, ILGY…GLTL, LVSG…SYVL, FSVT…VLAI, and SCIF…SVVL.

Belongs to the auxin efflux carrier (TC 2.A.69) family.

It is found in the cell membrane. This is an uncharacterized protein from Methanothermobacter thermautotrophicus (strain ATCC 29096 / DSM 1053 / JCM 10044 / NBRC 100330 / Delta H) (Methanobacterium thermoautotrophicum).